The following is a 78-amino-acid chain: Delta-conotoxin TxVIA (78 aa).

Residues 1–22 form the signal peptide; sequence MKLTCMMIVAVLFLTAWTFATA. The propeptide occupies 23 to 49; that stretch reads DDPRNGLGNLFSNAHHEMKNPEASKLN. Disulfide bonds link cysteine 53–cysteine 68, cysteine 60–cysteine 72, and cysteine 67–cysteine 77. Methionine 59 carries the methionine sulfoxide; partial modification.

The protein belongs to the conotoxin O1 superfamily. In terms of tissue distribution, expressed by the venom duct.

It is found in the secreted. In terms of biological role, delta-conotoxins bind to site 6 of voltage-gated sodium channels (Nav) and inhibit the inactivation process. Binding of this toxin is strongly calcium-dependent but not voltage-dependent. The binding site is most likely on the extracellular side of the sodium channel. Binds receptor sites on both mollusk and rat central nervous system, but despite its high affinity binding to rat sodium channel, it has no functional effect in vivo and in vitro on it. Also has no effect on Gambusia fish. Is important in mollusk for the paralysis of the prey. Upon injection of the peptide, a subordinate lobster assumes an exaggerated dominant posture (of a 'King-Kong' lobster!). This chain is Delta-conotoxin TxVIA, found in Conus textile (Cloth-of-gold cone).